The primary structure comprises 342 residues: Holliday junction branch migration complex subunit RuvB (342 aa).

The tract at residues 1–184 (MDNERVITAV…FGIVQRLEFY (184 aa)) is large ATPase domain (RuvB-L). ATP contacts are provided by residues Ile23, Arg24, Gly65, Lys68, Thr69, Thr70, 131 to 133 (EDY), Arg174, Tyr184, and Arg221. Thr69 contributes to the Mg(2+) binding site. The segment at 185-255 (SVDDLSGIVS…IAQRALDMLE (71 aa)) is small ATPAse domain (RuvB-S). The interval 258-342 (SCGLDGTDRR…PRQDGDLFND (85 aa)) is head domain (RuvB-H). DNA is bound by residues Arg313 and Arg318.

It belongs to the RuvB family. In terms of assembly, homohexamer. Forms an RuvA(8)-RuvB(12)-Holliday junction (HJ) complex. HJ DNA is sandwiched between 2 RuvA tetramers; dsDNA enters through RuvA and exits via RuvB. An RuvB hexamer assembles on each DNA strand where it exits the tetramer. Each RuvB hexamer is contacted by two RuvA subunits (via domain III) on 2 adjacent RuvB subunits; this complex drives branch migration. In the full resolvosome a probable DNA-RuvA(4)-RuvB(12)-RuvC(2) complex forms which resolves the HJ.

The protein resides in the cytoplasm. It carries out the reaction ATP + H2O = ADP + phosphate + H(+). The RuvA-RuvB-RuvC complex processes Holliday junction (HJ) DNA during genetic recombination and DNA repair, while the RuvA-RuvB complex plays an important role in the rescue of blocked DNA replication forks via replication fork reversal (RFR). RuvA specifically binds to HJ cruciform DNA, conferring on it an open structure. The RuvB hexamer acts as an ATP-dependent pump, pulling dsDNA into and through the RuvAB complex. RuvB forms 2 homohexamers on either side of HJ DNA bound by 1 or 2 RuvA tetramers; 4 subunits per hexamer contact DNA at a time. Coordinated motions by a converter formed by DNA-disengaged RuvB subunits stimulates ATP hydrolysis and nucleotide exchange. Immobilization of the converter enables RuvB to convert the ATP-contained energy into a lever motion, pulling 2 nucleotides of DNA out of the RuvA tetramer per ATP hydrolyzed, thus driving DNA branch migration. The RuvB motors rotate together with the DNA substrate, which together with the progressing nucleotide cycle form the mechanistic basis for DNA recombination by continuous HJ branch migration. Branch migration allows RuvC to scan DNA until it finds its consensus sequence, where it cleaves and resolves cruciform DNA. The protein is Holliday junction branch migration complex subunit RuvB of Alcanivorax borkumensis (strain ATCC 700651 / DSM 11573 / NCIMB 13689 / SK2).